We begin with the raw amino-acid sequence, 941 residues long: Translation initiation factor IF-2 (941 aa).

Residues 170 to 209 (DAQKAEVDAQKAEAEKPVEVKADESAIEEKKRVAAEESKK) show a composition bias toward basic and acidic residues. Disordered stretches follow at residues 170-228 (DAQK…KAAA) and 252-351 (RAIK…SNFQ). Over residues 256–269 (APEPVAPVAKPAAE) the composition is skewed to low complexity. Residues 271 to 297 (TLHKPADKKPGEKKDEKKPAVTADKKS) are compositionally biased toward basic and acidic residues. Over residues 299-308 (KSANVSSTWQ) the composition is skewed to polar residues. Residues 441-610 (PRAPVVTVMG…LLQAEVLELK (170 aa)) form the tr-type G domain. The interval 450–457 (GHVDHGKT) is G1. Residue 450-457 (GHVDHGKT) participates in GTP binding. Residues 475–479 (GITQH) form a G2 region. The interval 496-499 (DTPG) is G3. GTP-binding positions include 496-500 (DTPGH) and 550-553 (NKID). The interval 550–553 (NKID) is G4. The tract at residues 586–588 (SAK) is G5.

It belongs to the TRAFAC class translation factor GTPase superfamily. Classic translation factor GTPase family. IF-2 subfamily.

It is found in the cytoplasm. Functionally, one of the essential components for the initiation of protein synthesis. Protects formylmethionyl-tRNA from spontaneous hydrolysis and promotes its binding to the 30S ribosomal subunits. Also involved in the hydrolysis of GTP during the formation of the 70S ribosomal complex. This Herminiimonas arsenicoxydans protein is Translation initiation factor IF-2.